Consider the following 572-residue polypeptide: Probable terpene synthase 11 (572 aa).

Mg(2+) is bound by residues aspartate 317, aspartate 321, and glutamate 469. The short motif at 317-321 (DDIFD) is the DDXXD motif element.

It belongs to the terpene synthase family. Mg(2+) serves as cofactor.

Its function is as follows. Probable sesquiterpene synthase. In Ricinus communis (Castor bean), this protein is Probable terpene synthase 11 (TPS11).